The chain runs to 184 residues: Adenylate kinase 1 (184 aa).

Position 11-16 (G11–T16) interacts with ATP. The tract at residues S31 to V60 is NMP. AMP-binding positions include T32, R37, E58 to V60, G86 to R89, and Q93. The segment at S127–D133 is LID. Residue R128 participates in ATP binding. The AMP site is built by R130 and R141. Q169 is a binding site for ATP.

It belongs to the adenylate kinase family. As to quaternary structure, monomer.

It localises to the cytoplasm. The catalysed reaction is AMP + ATP = 2 ADP. It functions in the pathway purine metabolism; AMP biosynthesis via salvage pathway; AMP from ADP: step 1/1. In terms of biological role, catalyzes the reversible transfer of the terminal phosphate group between ATP and AMP. Plays an important role in cellular energy homeostasis and in adenine nucleotide metabolism. This chain is Adenylate kinase 1, found in Nostoc sp. (strain PCC 7120 / SAG 25.82 / UTEX 2576).